The primary structure comprises 347 residues: Oxygen sensor histidine kinase NreB (347 aa).

Residues Cys-59, Cys-62, Cys-74, and Cys-77 each contribute to the [4Fe-4S] cluster site. One can recognise a Histidine kinase domain in the interval 153-347 (RISRELHDGI…IVTLEVPITD (195 aa)). At His-159 the chain carries Phosphohistidine; by autocatalysis.

The cofactor is [4Fe-4S] cluster. Autophosphorylated.

The protein localises to the cytoplasm. The enzyme catalyses ATP + protein L-histidine = ADP + protein N-phospho-L-histidine.. Activated by cysteine desulfurase, Fe(2+) ions and cysteine and inhibited by oxygen and ADP. Member of the two-component regulatory system NreB/NreC involved in the control of dissimilatory nitrate/nitrite reduction in response to oxygen. NreB functions as a direct oxygen sensor histidine kinase which is autophosphorylated, in the absence of oxygen, probably at the conserved histidine residue, and transfers its phosphate group probably to a conserved aspartate residue of NreC. NreB/NreC activates the expression of the nitrate (narGHJI) and nitrite (nir) reductase operons, as well as the putative nitrate transporter gene narT. The sequence is that of Oxygen sensor histidine kinase NreB (nreB) from Staphylococcus carnosus (strain TM300).